We begin with the raw amino-acid sequence, 213 residues long: Nucleolar protein 12 (213 aa).

The stretch at 32-95 forms a coiled coil; the sequence is GFHKRKVERK…RLVTAKTESV (64 aa). Residues 117 to 213 form a disordered region; it reads ARLLGLPTPE…LTGKARHSGE (97 aa). Composition is skewed to basic residues over residues 169–181 and 197–213; these read AHSR…KRLR and SKTR…HSGE.

This sequence belongs to the RRP17 family. As to quaternary structure, interacts with KIAA1191.

Its subcellular location is the nucleus. The protein resides in the nucleolus. The protein localises to the cytoplasm. In terms of biological role, multifunctional RNA binding protein that plays a role in RNA metabolism and DNA maintenance. Participates in the resolution of DNA stress and the maintenance of genome integrity by localizing to sites of DNA insults. Also plays a role in proper nucleolar organization by limiting nucleolar size and regulating nucleolar number. Mechanistically, regulates the nucleolar levels of fibrillarin and nucleolin, two key players in pre-rRNA processing and ribosome assembly. The chain is Nucleolar protein 12 (NOL12) from Bos taurus (Bovine).